Reading from the N-terminus, the 457-residue chain is Argininosuccinate lyase (457 aa).

Belongs to the lyase 1 family. Argininosuccinate lyase subfamily.

It is found in the cytoplasm. It catalyses the reaction 2-(N(omega)-L-arginino)succinate = fumarate + L-arginine. The protein operates within amino-acid biosynthesis; L-arginine biosynthesis; L-arginine from L-ornithine and carbamoyl phosphate: step 3/3. This is Argininosuccinate lyase from Pectobacterium carotovorum subsp. carotovorum (strain PC1).